Consider the following 329-residue polypeptide: DNA-directed RNA polymerase subunit alpha (329 aa).

Positions 1 to 235 (MQNSIMDFLR…EQLEAFVDLR (235 aa)) are alpha N-terminal domain (alpha-NTD). The segment at 249–329 (FEPILLRPVD…NWPPSSILDE (81 aa)) is alpha C-terminal domain (alpha-CTD).

The protein belongs to the RNA polymerase alpha chain family. In terms of assembly, homodimer. The RNAP catalytic core consists of 2 alpha, 1 beta, 1 beta' and 1 omega subunit. When a sigma factor is associated with the core the holoenzyme is formed, which can initiate transcription.

The catalysed reaction is RNA(n) + a ribonucleoside 5'-triphosphate = RNA(n+1) + diphosphate. Functionally, DNA-dependent RNA polymerase catalyzes the transcription of DNA into RNA using the four ribonucleoside triphosphates as substrates. This chain is DNA-directed RNA polymerase subunit alpha, found in Buchnera aphidicola subsp. Acyrthosiphon pisum (strain APS) (Acyrthosiphon pisum symbiotic bacterium).